Consider the following 379-residue polypeptide: Putative nucleosome assembly protein C2D10.11C (379 aa).

Over residues 1-10 (MSKGPGDFKK) the composition is skewed to basic and acidic residues. 2 disordered regions span residues 1–30 (MSKG…DVHL) and 345–379 (SDFN…EISD). Positions 16 to 28 (AAQTPQNTPSSDV) are enriched in polar residues.

It belongs to the nucleosome assembly protein (NAP) family.

The protein resides in the nucleus. In Schizosaccharomyces pombe (strain 972 / ATCC 24843) (Fission yeast), this protein is Putative nucleosome assembly protein C2D10.11C.